The chain runs to 434 residues: MAKTDIARRVYNHAWKLDPIIRSLIDTDFYKLLMLQMIWKLYPDVNASFTLINRTKRVHLAEEIDEGDLREQLDHARTLRLSKKEMIWLAGNSFYGRAQIFEPEFLAWLSNFQLPEYELSKKDGQYVLDFHGSWKETTMWEIPALAIVNELRSRSAMKALGPFTLDVLYARAKAKMWSKVERLKELPGLRISDFGTRRRHSFLWQRWCVEALKEGIGPAFTGTSNVLLAMDSDLEAVGTNAHELPMVAAALAQTDEQLRNAPYKILRDWNKLYGGNLLIVLPDAFGTAAFLRDAPEWVADWTGFRPDSAPPIEGGEKIIDWWKKMGRDPRQKLLIFSDGLDVDAIIDTYRHFEGRVRMSFGWGTNLTNDFAGCAPTEISGLNPISIVCKVSDANGRPAVKLSDNPQKATGEPAEVERYLKFFGAEDRVDQTVLV.

The residue at position 242 (His242) is a Phosphohistidine; by autocatalysis.

Belongs to the NAPRTase family. In terms of processing, transiently phosphorylated on a His residue during the reaction cycle. Phosphorylation strongly increases the affinity for substrates and increases the rate of nicotinate D-ribonucleotide production. Dephosphorylation regenerates the low-affinity form of the enzyme, leading to product release.

The enzyme catalyses nicotinate + 5-phospho-alpha-D-ribose 1-diphosphate + ATP + H2O = nicotinate beta-D-ribonucleotide + ADP + phosphate + diphosphate. It functions in the pathway cofactor biosynthesis; NAD(+) biosynthesis; nicotinate D-ribonucleotide from nicotinate: step 1/1. Its function is as follows. Catalyzes the synthesis of beta-nicotinate D-ribonucleotide from nicotinate and 5-phospho-D-ribose 1-phosphate at the expense of ATP. This chain is Nicotinate phosphoribosyltransferase, found in Rhizobium etli (strain ATCC 51251 / DSM 11541 / JCM 21823 / NBRC 15573 / CFN 42).